Consider the following 573-residue polypeptide: Membrane protein insertase YidC (573 aa).

Residues 6–26 form a helical membrane-spanning segment; the sequence is VFLIFAWLMVAALLWMEWGKD. The segment at 63–82 is disordered; the sequence is PQAGSPAAVPATSTTTATPA. 5 consecutive transmembrane segments (helical) span residues 355-375, 379-399, 446-466, 488-508, and 524-544; these read FSIMAIIGQGLFWVLSHLHSF, WGWAIIGLVVLLRLALYPLSA, GGCLPLLIQMPIFFALYWVLV, PYFILPVLNIAIMWATQKLTP, and PLVFGVMMAFMPAGLVLYWVV.

Belongs to the OXA1/ALB3/YidC family. Type 1 subfamily. As to quaternary structure, interacts with the Sec translocase complex via SecD. Specifically interacts with transmembrane segments of nascent integral membrane proteins during membrane integration.

The protein localises to the cell inner membrane. Functionally, required for the insertion and/or proper folding and/or complex formation of integral membrane proteins into the membrane. Involved in integration of membrane proteins that insert both dependently and independently of the Sec translocase complex, as well as at least some lipoproteins. Aids folding of multispanning membrane proteins. This chain is Membrane protein insertase YidC, found in Xanthomonas campestris pv. campestris (strain 8004).